The chain runs to 264 residues: Phosphoribosylaminoimidazole-succinocarboxamide synthase (264 aa).

This sequence belongs to the SAICAR synthetase family.

The catalysed reaction is 5-amino-1-(5-phospho-D-ribosyl)imidazole-4-carboxylate + L-aspartate + ATP = (2S)-2-[5-amino-1-(5-phospho-beta-D-ribosyl)imidazole-4-carboxamido]succinate + ADP + phosphate + 2 H(+). It participates in purine metabolism; IMP biosynthesis via de novo pathway; 5-amino-1-(5-phospho-D-ribosyl)imidazole-4-carboxamide from 5-amino-1-(5-phospho-D-ribosyl)imidazole-4-carboxylate: step 1/2. This chain is Phosphoribosylaminoimidazole-succinocarboxamide synthase (purC), found in Synechocystis sp. (strain ATCC 27184 / PCC 6803 / Kazusa).